Here is a 790-residue protein sequence, read N- to C-terminus: Lon protease (790 aa).

The region spanning 13 to 209 (LPLFPIRNTV…RLTDHVAKEI (197 aa)) is the Lon N-terminal domain. Position 362–369 (362–369 (GPPGVGKT)) interacts with ATP. The region spanning 598-779 (DNQVGITIGL…DQVLDIALAT (182 aa)) is the Lon proteolytic domain. Residues Ser685 and Lys728 contribute to the active site.

It belongs to the peptidase S16 family. In terms of assembly, homohexamer. Organized in a ring with a central cavity.

It is found in the cytoplasm. It carries out the reaction Hydrolysis of proteins in presence of ATP.. In terms of biological role, ATP-dependent serine protease that mediates the selective degradation of mutant and abnormal proteins as well as certain short-lived regulatory proteins. Required for cellular homeostasis and for survival from DNA damage and developmental changes induced by stress. Degrades polypeptides processively to yield small peptide fragments that are 5 to 10 amino acids long. Binds to DNA in a double-stranded, site-specific manner. This is Lon protease from Orientia tsutsugamushi (strain Ikeda) (Rickettsia tsutsugamushi).